The primary structure comprises 474 residues: Citrate synthase 4, mitochondrial (474 aa).

The N-terminal 16 residues, 1–16 (MVFFRSVSAFTRLRSR), are a transit peptide targeting the mitochondrion. Catalysis depends on residues His308, His354, and Asp409.

This sequence belongs to the citrate synthase family. Homodimer.

Its subcellular location is the mitochondrion matrix. The catalysed reaction is oxaloacetate + acetyl-CoA + H2O = citrate + CoA + H(+). Its pathway is carbohydrate metabolism; tricarboxylic acid cycle; isocitrate from oxaloacetate: step 1/2. This chain is Citrate synthase 4, mitochondrial (CSY4), found in Arabidopsis thaliana (Mouse-ear cress).